Here is a 272-residue protein sequence, read N- to C-terminus: Protein UL11 (272 aa).

The signal sequence occupies residues 1–31 (MLFRYITFHREKVLYLTAACIFGVYISLHDA). Residues 32 to 224 (CIPVVGKIGT…PLQPSPQHQH (193 aa)) are Extracellular-facing. Asparagine 42, asparagine 93, asparagine 100, and asparagine 142 each carry an N-linked (GlcNAc...) asparagine; by host glycan. Residues 142–200 (NGTFPTTTTKKPTTTTRTTTTTTQRTTTTRTTTTAKKTTISTTHHKHPSPKKSTTPNSH) form a disordered region. The span at 147–183 (TTTTKKPTTTTRTTTTTTQRTTTTRTTTTAKKTTIST) shows a compositional bias: low complexity. The chain crosses the membrane as a helical span at residues 225–245 (LATHALWVLAVVIVIIIIIIF). At 246–272 (YFRIPQKLWLLWQHDKHGIVLIPQTDL) the chain is on the cytoplasmic side.

The protein belongs to the RL11 family. In terms of assembly, interacts with host PTPRC; this interaction affects T-cell signaling. In terms of processing, glycosylated.

The protein resides in the host cell membrane. It is found in the host endoplasmic reticulum. Its function is as follows. Plays a role in the modulation of host immune response by modulating T-cell function. Interacts with host PTPRC/CD45 and thereby reduces host TCR signaling and T-cell proliferation. This Human cytomegalovirus (strain Merlin) (HHV-5) protein is Protein UL11 (UL11).